The chain runs to 485 residues: Ribosomal protein uS12 methylthiotransferase RimO (485 aa).

The 111-residue stretch at 37 to 147 (SRIGFVSLGC…VVEQVHEHLP (111 aa)) folds into the MTTase N-terminal domain. The [4Fe-4S] cluster site is built by cysteine 46, cysteine 82, cysteine 111, cysteine 179, cysteine 183, and cysteine 186. One can recognise a Radical SAM core domain in the interval 165-402 (LTPRHYAYLK…MEVQGEISAA (238 aa)). The TRAM domain maps to 405–471 (KARIGNEYQV…EHDVWAVLSE (67 aa)).

This sequence belongs to the methylthiotransferase family. RimO subfamily. [4Fe-4S] cluster is required as a cofactor.

The protein localises to the cytoplasm. The enzyme catalyses L-aspartate(89)-[ribosomal protein uS12]-hydrogen + (sulfur carrier)-SH + AH2 + 2 S-adenosyl-L-methionine = 3-methylsulfanyl-L-aspartate(89)-[ribosomal protein uS12]-hydrogen + (sulfur carrier)-H + 5'-deoxyadenosine + L-methionine + A + S-adenosyl-L-homocysteine + 2 H(+). Catalyzes the methylthiolation of an aspartic acid residue of ribosomal protein uS12. The chain is Ribosomal protein uS12 methylthiotransferase RimO from Alteromonas mediterranea (strain DSM 17117 / CIP 110805 / LMG 28347 / Deep ecotype).